Consider the following 238-residue polypeptide: MARRNAASPQMGLDLAPAAAAVQRLCGVDEAGRGPLAGPVYAAAVILDPKRPIRGLADSKILTAAKREQLYEKICERALGWHIAFATVEEIDTLNILHASMLAMQRAVQGLAASGIVPDLVQVDGNRCPRVPFPVEAIVQGDALVKAISAASILAKVARDRELRVLHERYPQYGFDSHVGYGTPQHLAALAEFGATPHHRRSFAPVREALARLPMFTAMPATAEVIEPVATVSVTAAQ.

The RNase H type-2 domain maps to 23-215 (QRLCGVDEAG…VREALARLPM (193 aa)). Residues D29, E30, and D124 each contribute to the a divalent metal cation site.

Belongs to the RNase HII family. Mn(2+) serves as cofactor. Mg(2+) is required as a cofactor.

The protein resides in the cytoplasm. The catalysed reaction is Endonucleolytic cleavage to 5'-phosphomonoester.. Endonuclease that specifically degrades the RNA of RNA-DNA hybrids. This is Ribonuclease HII from Cupriavidus necator (strain ATCC 17699 / DSM 428 / KCTC 22496 / NCIMB 10442 / H16 / Stanier 337) (Ralstonia eutropha).